Reading from the N-terminus, the 387-residue chain is Succinate--CoA ligase [ADP-forming] subunit beta (387 aa).

Residues 9–244 (KQLFASYGLP…VSQEDDRENR (236 aa)) form the ATP-grasp domain. ATP-binding positions include Lys-46, 53–55 (GRG), Glu-99, Cys-102, and Glu-107. Residues Asn-199 and Asp-213 each contribute to the Mg(2+) site. Residues Asn-264 and 321–323 (GIV) each bind substrate.

Belongs to the succinate/malate CoA ligase beta subunit family. In terms of assembly, heterotetramer of two alpha and two beta subunits. It depends on Mg(2+) as a cofactor.

The enzyme catalyses succinate + ATP + CoA = succinyl-CoA + ADP + phosphate. It catalyses the reaction GTP + succinate + CoA = succinyl-CoA + GDP + phosphate. It functions in the pathway carbohydrate metabolism; tricarboxylic acid cycle; succinate from succinyl-CoA (ligase route): step 1/1. Functionally, succinyl-CoA synthetase functions in the citric acid cycle (TCA), coupling the hydrolysis of succinyl-CoA to the synthesis of either ATP or GTP and thus represents the only step of substrate-level phosphorylation in the TCA. The beta subunit provides nucleotide specificity of the enzyme and binds the substrate succinate, while the binding sites for coenzyme A and phosphate are found in the alpha subunit. The protein is Succinate--CoA ligase [ADP-forming] subunit beta of Legionella pneumophila (strain Corby).